The sequence spans 876 residues: Leucine--tRNA ligase (876 aa).

A 'HIGH' region motif is present at residues 42 to 52 (PYPSGKLHMGH). Positions 634–638 (KMSKS) match the 'KMSKS' region motif. Residue Lys-637 participates in ATP binding.

It belongs to the class-I aminoacyl-tRNA synthetase family.

Its subcellular location is the cytoplasm. It carries out the reaction tRNA(Leu) + L-leucine + ATP = L-leucyl-tRNA(Leu) + AMP + diphosphate. The sequence is that of Leucine--tRNA ligase from Neisseria meningitidis serogroup B (strain ATCC BAA-335 / MC58).